Consider the following 505-residue polypeptide: L-carnitine/gamma-butyrobetaine antiporter (505 aa).

Transmembrane regions (helical) follow at residues 10–30 (IEPK…WLTV), 51–71 (WGWA…WLVF), 92–112 (IFMM…SIEI), 143–163 (GPLP…FFFV), 195–215 (FYLV…TPLV), 231–251 (LDAI…ACGL), 263–283 (SYLS…SFIM), 316–336 (WTVF…IFLA), 347–367 (LCFG…TVLG), 403–423 (LSTA…VTLI), 446–466 (LLVR…LLAL), and 475–495 (AIIA…LSFI).

The protein belongs to the BCCT transporter (TC 2.A.15) family. CaiT subfamily. As to quaternary structure, homotrimer.

The protein localises to the cell inner membrane. The enzyme catalyses 4-(trimethylamino)butanoate(in) + (R)-carnitine(out) = 4-(trimethylamino)butanoate(out) + (R)-carnitine(in). It participates in amine and polyamine metabolism; carnitine metabolism. In terms of biological role, catalyzes the exchange of L-carnitine for gamma-butyrobetaine. This chain is L-carnitine/gamma-butyrobetaine antiporter, found in Salmonella agona (strain SL483).